The primary structure comprises 444 residues: ATP-dependent protease ATPase subunit HslU (444 aa).

ATP-binding positions include Ile-18, 60-65 (GVGKTE), Asp-256, Glu-322, and Arg-394.

Belongs to the ClpX chaperone family. HslU subfamily. A double ring-shaped homohexamer of HslV is capped on each side by a ring-shaped HslU homohexamer. The assembly of the HslU/HslV complex is dependent on binding of ATP.

Its subcellular location is the cytoplasm. Its function is as follows. ATPase subunit of a proteasome-like degradation complex; this subunit has chaperone activity. The binding of ATP and its subsequent hydrolysis by HslU are essential for unfolding of protein substrates subsequently hydrolyzed by HslV. HslU recognizes the N-terminal part of its protein substrates and unfolds these before they are guided to HslV for hydrolysis. This Serratia proteamaculans (strain 568) protein is ATP-dependent protease ATPase subunit HslU.